The primary structure comprises 229 residues: 2-C-methyl-D-erythritol 4-phosphate cytidylyltransferase (229 aa).

This sequence belongs to the IspD/TarI cytidylyltransferase family. IspD subfamily.

It catalyses the reaction 2-C-methyl-D-erythritol 4-phosphate + CTP + H(+) = 4-CDP-2-C-methyl-D-erythritol + diphosphate. It functions in the pathway isoprenoid biosynthesis; isopentenyl diphosphate biosynthesis via DXP pathway; isopentenyl diphosphate from 1-deoxy-D-xylulose 5-phosphate: step 2/6. In terms of biological role, catalyzes the formation of 4-diphosphocytidyl-2-C-methyl-D-erythritol from CTP and 2-C-methyl-D-erythritol 4-phosphate (MEP). The protein is 2-C-methyl-D-erythritol 4-phosphate cytidylyltransferase of Clostridium botulinum (strain Loch Maree / Type A3).